The primary structure comprises 353 residues: Paraneoplastic antigen Ma1 homolog (353 aa).

Belongs to the PNMA family. As to expression, testis and brain specific.

It is found in the nucleus. The protein resides in the nucleolus. The sequence is that of Paraneoplastic antigen Ma1 homolog (Pnma1) from Rattus norvegicus (Rat).